A 136-amino-acid chain; its full sequence is Large ribosomal subunit protein bL20 (136 aa).

Belongs to the bacterial ribosomal protein bL20 family.

Functionally, binds directly to 23S ribosomal RNA and is necessary for the in vitro assembly process of the 50S ribosomal subunit. It is not involved in the protein synthesizing functions of that subunit. The polypeptide is Large ribosomal subunit protein bL20 (Tropheryma whipplei (strain Twist) (Whipple's bacillus)).